The primary structure comprises 261 residues: CD40 ligand (261 aa).

Topologically, residues 1–22 (MVETYHQPAPRSAATGLPVSMK) are cytoplasmic. The helical; Signal-anchor for type II membrane protein transmembrane segment at 23-43 (IFMYLLTVFLITQMIGSALFA) threads the bilayer. Over 44 to 261 (VYLHRRLDKI…GFTSFGLLKL (218 aa)) the chain is Extracellular. One can recognise a THD domain in the interval 122 to 261 (IAAHVISEAS…GFTSFGLLKL (140 aa)). Cys-178 and Cys-218 form a disulfide bridge. A glycan (N-linked (GlcNAc...) asparagine) is linked at Asn-240.

It belongs to the tumor necrosis factor family. In terms of assembly, homotrimer. Interacts with CD28. CD40 ligand, soluble form: Exists as either a monomer or a homotrimer. Forms a ternary complex between CD40 and integrins for CD40-CD40LG signaling. In terms of processing, the soluble form derives from the membrane form by proteolytic processing.

It localises to the cell membrane. Its subcellular location is the cell surface. The protein localises to the secreted. Functionally, cytokine that acts as a ligand to CD40/TNFRSF5. Costimulates T-cell proliferation and cytokine production. Its cross-linking on T-cells generates a costimulatory signal which enhances the production of IL4 and IL10 in conjunction with the TCR/CD3 ligation and CD28 costimulation. Induces the activation of NF-kappa-B. Induces the activation of kinases MAPK8 and PAK2 in T-cells. Mediates B-cell proliferation in the absence of co-stimulus as well as IgE production in the presence of IL4. Involved in immunoglobulin class switching. Its function is as follows. Acts as a ligand for integrins, specifically ITGA5:ITGB1 and ITGAV:ITGB3; both integrins and the CD40 receptor are required for activation of CD40-CD40LG signaling, which have cell-type dependent effects, such as B-cell activation, NF-kappa-B signaling and anti-apoptotic signaling. This Aotus trivirgatus (Three-striped night monkey) protein is CD40 ligand (CD40LG).